We begin with the raw amino-acid sequence, 924 residues long: Isoleucine--tRNA ligase (924 aa).

A 'HIGH' region motif is present at residues Pro57–His67. L-isoleucyl-5'-AMP is bound at residue Glu552. Positions Lys593–Ser597 match the 'KMSKS' region motif. Lys596 lines the ATP pocket. Residues Cys891, Cys894, Cys911, and Cys914 each contribute to the Zn(2+) site.

Belongs to the class-I aminoacyl-tRNA synthetase family. IleS type 1 subfamily. Monomer. It depends on Zn(2+) as a cofactor.

Its subcellular location is the cytoplasm. It carries out the reaction tRNA(Ile) + L-isoleucine + ATP = L-isoleucyl-tRNA(Ile) + AMP + diphosphate. In terms of biological role, catalyzes the attachment of isoleucine to tRNA(Ile). As IleRS can inadvertently accommodate and process structurally similar amino acids such as valine, to avoid such errors it has two additional distinct tRNA(Ile)-dependent editing activities. One activity is designated as 'pretransfer' editing and involves the hydrolysis of activated Val-AMP. The other activity is designated 'posttransfer' editing and involves deacylation of mischarged Val-tRNA(Ile). The protein is Isoleucine--tRNA ligase of Geobacillus kaustophilus (strain HTA426).